The following is a 440-amino-acid chain: Protein translocase subunit SecY (440 aa).

10 helical membrane-spanning segments follow: residues isoleucine 17–glycine 37, isoleucine 74–valine 94, tyrosine 116–leucine 135, phenylalanine 155–methionine 175, leucine 178–threonine 198, glycine 213–valine 233, valine 270–valine 290, tryptophan 316–valine 336, leucine 374–aspartate 394, and glycine 403–valine 423.

The protein belongs to the SecY/SEC61-alpha family. Component of the Sec protein translocase complex. Heterotrimer consisting of SecY, SecE and SecG subunits. The heterotrimers can form oligomers, although 1 heterotrimer is thought to be able to translocate proteins. Interacts with the ribosome. Interacts with SecDF, and other proteins may be involved. Interacts with SecA.

It is found in the cell membrane. The central subunit of the protein translocation channel SecYEG. Consists of two halves formed by TMs 1-5 and 6-10. These two domains form a lateral gate at the front which open onto the bilayer between TMs 2 and 7, and are clamped together by SecE at the back. The channel is closed by both a pore ring composed of hydrophobic SecY resides and a short helix (helix 2A) on the extracellular side of the membrane which forms a plug. The plug probably moves laterally to allow the channel to open. The ring and the pore may move independently. The chain is Protein translocase subunit SecY from Corynebacterium glutamicum (strain ATCC 13032 / DSM 20300 / JCM 1318 / BCRC 11384 / CCUG 27702 / LMG 3730 / NBRC 12168 / NCIMB 10025 / NRRL B-2784 / 534).